A 152-amino-acid chain; its full sequence is Aspartate 1-decarboxylase (152 aa).

The active-site Schiff-base intermediate with substrate; via pyruvic acid is the serine 24. The residue at position 24 (serine 24) is a Pyruvic acid (Ser). Residue threonine 56 coordinates substrate. Catalysis depends on tyrosine 57, which acts as the Proton donor. A substrate-binding site is contributed by 72-74 (GAA).

This sequence belongs to the PanD family. In terms of assembly, heterooctamer of four alpha and four beta subunits. Pyruvate serves as cofactor. Post-translationally, is synthesized initially as an inactive proenzyme, which is activated by self-cleavage at a specific serine bond to produce a beta-subunit with a hydroxyl group at its C-terminus and an alpha-subunit with a pyruvoyl group at its N-terminus.

The protein resides in the cytoplasm. The catalysed reaction is L-aspartate + H(+) = beta-alanine + CO2. The protein operates within cofactor biosynthesis; (R)-pantothenate biosynthesis; beta-alanine from L-aspartate: step 1/1. In terms of biological role, catalyzes the pyruvoyl-dependent decarboxylation of aspartate to produce beta-alanine. The sequence is that of Aspartate 1-decarboxylase from Methylobacterium nodulans (strain LMG 21967 / CNCM I-2342 / ORS 2060).